We begin with the raw amino-acid sequence, 549 residues long: Neutral amino acid transporter 9 (549 aa).

The segment at 1-27 (MDEDSKPLLGSVPTGDYYTDSLDPKQR) is disordered. Over 1 to 107 (MDEDSKPLLG…GGDSPIKNPS (107 aa)) the chain is Cytoplasmic. Residues 108 to 128 (IVTIFAIWNTMMGTSILSIPW) form a helical membrane-spanning segment. An important for arginine binding and amino acid transport region spans residues 117 to 122 (TMMGTS). Serine 122 serves as a coordination point for arginine. The Lumenal segment spans residues 129-134 (GIKQAG). Residues 135–155 (FTLGIIIIVLMGLLTLYCCYR) form a helical membrane-spanning segment. Residues 156–186 (VLKSTKSIPYVDTSDWEFPDVCKYYFGGFGK) lie on the Cytoplasmic side of the membrane. Residues 187–213 (WSSLVFSLVSLIGAMVVYWVLMSNFLF) form a helical membrane-spanning segment. Residues 214 to 271 (NTGKFIFNYVHNVNTSDAFGTNGTERVICPYPDVDPHGNSSTSLYSGSDNSTGLEFDH) are Lumenal-facing. N-linked (GlcNAc...) asparagine glycosylation is found at asparagine 227, asparagine 235, asparagine 252, and asparagine 263. A disulfide bond links cysteine 242 and cysteine 412. The helical transmembrane segment at 272-288 (WWSKTNTIPFYLILLLL) threads the bilayer. Topologically, residues 289–297 (PLLNFRSAS) are cytoplasmic. Residues 298–322 (FFARFTFLGTISVIYLIFLVTYKAI) form a helical membrane-spanning segment. Residues 323–344 (QLGFHLEFHWFDSSMFFVPEFR) are Lumenal-facing. Residues 345-365 (TLFPQLSGVLTLAFFIHNCII) form a helical membrane-spanning segment. At 366-382 (TLMKNNKHQENNVRDLS) the chain is on the cytoplasmic side. Residues 383 to 403 (LAYLLVGLTYLYVGVLIFAAF) form a helical membrane-spanning segment. Residues 404-425 (PSPPLSKECIEPNFLDNFPSSD) are Lumenal-facing. A helical transmembrane segment spans residues 426–446 (ILVFVARTFLLFQMTTVYPLL). A CARC motif motif is present at residues 432–442 (RTFLLFQMTTV). Positions 445–451 (LLGYLVR) match the CRAC motif motif. The Cytoplasmic segment spans residues 447–467 (GYLVRVQLMGQIFGNHYPGFL). A helical membrane pass occupies residues 468 to 488 (HVFVLNVFVVGAGVLMARFYP). Over 489–495 (NIGSIIR) the chain is Lumenal. A helical transmembrane segment spans residues 496–516 (YSGALCGLALVFVLPSLIHMV). Over 517–528 (SLKRRGELRWTS) the chain is Cytoplasmic. Residues 529 to 549 (TLFHGFLILLGVANLLGQFFM) form a helical membrane-spanning segment.

It belongs to the amino acid/polyamine transporter 2 family. SLC38A9 subfamily. Associated component of the Ragulator complex. Associated component of the Rag GTPases heterodimers (RRAGA and RRAGC). In terms of processing, glycosylated.

The protein resides in the lysosome membrane. The protein localises to the late endosome membrane. The enzyme catalyses L-leucine(in) = L-leucine(out). It carries out the reaction L-tyrosine(in) = L-tyrosine(out). It catalyses the reaction L-glutamine(out) = L-glutamine(in). The catalysed reaction is L-asparagine(out) = L-asparagine(in). With respect to regulation, amino acid transport activity is increased by sodium. Transport of L-glutamine, leucine and tyrosine is increased by arginine binding. Its function is as follows. Lysosomal amino acid transporter involved in the activation of mTORC1 in response to amino acid levels. Probably acts as an amino acid sensor of the Rag GTPases and Ragulator complexes, 2 complexes involved in amino acid sensing and activation of mTORC1, a signaling complex promoting cell growth in response to growth factors, energy levels, and amino acids. Following activation by amino acids, the Ragulator and Rag GTPases function as a scaffold recruiting mTORC1 to lysosomes where it is in turn activated. SLC38A9 mediates transport of amino acids with low capacity and specificity with a slight preference for polar amino acids. Acts as an arginine sensor. Following activation by arginine binding, mediates transport of L-glutamine, leucine and tyrosine with high efficiency, and is required for the efficient utilization of these amino acids after lysosomal protein degradation. However, the transport mechanism is not well defined and the role of sodium is not clear. Guanine exchange factor (GEF) that, upon arginine binding, stimulates GDP release from RRAGA and therefore activates the Rag GTPase heterodimer and the mTORC1 pathway in response to nutrient sufficiency. The polypeptide is Neutral amino acid transporter 9 (Danio rerio (Zebrafish)).